The primary structure comprises 2387 residues: Paternally-expressed gene 3 protein (2387 aa).

The 83-residue stretch at histidine 44–tyrosine 126 folds into the SCAN box domain. Disordered stretches follow at residues glutamate 127–alanine 194, aspartate 262–alanine 305, alanine 321–glycine 371, and arginine 392–arginine 423. Basic and acidic residues-rich tracts occupy residues serine 160–proline 179, proline 291–alanine 305, alanine 321–proline 364, and histidine 404–arginine 423. The C2H2-type 1 zinc finger occupies tyrosine 451–histidine 473. A disordered region spans residues serine 492 to phenylalanine 542. Positions alanine 513–glycine 528 are enriched in basic and acidic residues. 2 consecutive C2H2-type zinc fingers follow at residues tyrosine 555–histidine 577 and tyrosine 610–histidine 632. The segment at tyrosine 668 to histidine 690 adopts a C2H2-type 4; degenerate zinc-finger fold. 3 disordered regions span residues proline 704 to glycine 747, phenylalanine 764 to tyrosine 797, and aspartate 820 to arginine 858. Positions methionine 711–isoleucine 720 are enriched in polar residues. Residues histidine 846–isoleucine 856 are compositionally biased toward basic residues. A C2H2-type 5 zinc finger spans residues tyrosine 884–histidine 906. A run of 57 repeats spans residues proline 965–glutamate 973, proline 974–glutamate 982, proline 983–alanine 991, proline 1001–glutamate 1009, proline 1010–proline 1018, proline 1028–alanine 1036, proline 1046–glutamate 1054, proline 1055–proline 1063, proline 1073–alanine 1081, proline 1091–glutamate 1099, proline 1109–glutamate 1117, proline 1118–proline 1126, proline 1136–glutamate 1144, proline 1145–glutamate 1153, proline 1154–glutamate 1162, proline 1163–glutamate 1171, proline 1172–glutamate 1180, proline 1190–glutamate 1198, proline 1199–glutamate 1207, proline 1217–proline 1225, proline 1235–glutamate 1243, proline 1253–glutamate 1261, proline 1280–glutamate 1288, proline 1289–glutamate 1297, proline 1298–glutamate 1306, proline 1307–glutamate 1315, proline 1316–glutamate 1324, proline 1325–glutamate 1333, proline 1334–glutamate 1342, proline 1343–glutamate 1351, proline 1352–glutamate 1360, proline 1361–glutamate 1369, proline 1370–glutamate 1378, proline 1379–glutamate 1387, proline 1388–glutamate 1396, proline 1397–glutamate 1405, proline 1406–glutamate 1414, proline 1415–glutamate 1423, proline 1424–glutamate 1432, proline 1433–glutamate 1441, proline 1442–glutamate 1450, proline 1451–glutamate 1459, proline 1460–glutamate 1468, proline 1469–glutamate 1477, proline 1478–glutamate 1486, proline 1496–glutamate 1504, proline 1505–glutamate 1513, proline 1514–glutamate 1522, proline 1523–glutamate 1531, proline 1532–glutamate 1540, proline 1541–glutamate 1549, proline 1550–glutamate 1558, proline 1559–glutamate 1567, proline 1568–glutamate 1576, proline 1577–glutamate 1585, proline 1586–glutamate 1594, and proline 1595–glutamate 1603. 2 stretches are compositionally biased toward polar residues: residues proline 965–threonine 989 and proline 1001–alanine 1020. A 37 X 9 AA repeat of P-A-Q-T-X-Y-X-X-E region spans residues proline 965 to glutamate 1603. The tract at residues proline 965–arginine 1651 is disordered. The span at proline 1046–threonine 1079 shows a compositional bias: polar residues. Polar residues-rich tracts occupy residues glutamate 1107–threonine 1178, proline 1190–lysine 1206, proline 1217–valine 1242, glutamate 1251–threonine 1484, and proline 1496–serine 1601. The C2H2-type 6; degenerate zinc-finger motif lies at asparagine 1859–tyrosine 1881. Residues leucine 1900 to aspartate 1921 are disordered. A compositionally biased stretch (acidic residues) spans serine 1905–aspartate 1921. 5 C2H2-type zinc fingers span residues tyrosine 1924 to histidine 1946, tyrosine 1980 to histidine 2002, proline 2040 to histidine 2062, tyrosine 2097 to histidine 2119, and tyrosine 2148 to histidine 2170. The segment at alanine 2059–cysteine 2102 is disordered. The disordered stretch occupies residues asparagine 2204 to proline 2322. Composition is skewed to acidic residues over residues alanine 2208–alanine 2228 and glutamate 2257–tyrosine 2311. 2 C2H2-type zinc fingers span residues tyrosine 2312 to histidine 2334 and phenylalanine 2363 to histidine 2385.

The protein belongs to the krueppel C2H2-type zinc-finger protein family. As to quaternary structure, homodimer. Interacts with SIAH1A and SIAH2. Interacts with TRAF2. Expressed at high levels in the cerebellum and at moderate levels in the testis and ovary.

It localises to the nucleus. The protein resides in the cytoplasm. Functionally, induces apoptosis in cooperation with SIAH1A. Acts as a mediator between p53/TP53 and BAX in a neuronal death pathway that is activated by DNA damage. Acts synergistically with TRAF2 and inhibits TNF induced apoptosis through activation of NF-kappa-B. The sequence is that of Paternally-expressed gene 3 protein (PEG3) from Bos taurus (Bovine).